The following is a 102-amino-acid chain: Integration host factor subunit alpha (102 aa).

The segment at 49-70 (FGNFQLRTKPQRPGRNPKTGEE) is disordered.

The protein belongs to the bacterial histone-like protein family. As to quaternary structure, heterodimer of an alpha and a beta chain.

Functionally, this protein is one of the two subunits of integration host factor, a specific DNA-binding protein that functions in genetic recombination as well as in transcriptional and translational control. The sequence is that of Integration host factor subunit alpha from Nitrosomonas europaea (strain ATCC 19718 / CIP 103999 / KCTC 2705 / NBRC 14298).